Reading from the N-terminus, the 135-residue chain is UPF0738 protein Aflv_2116 (135 aa).

Belongs to the UPF0738 family.

The sequence is that of UPF0738 protein Aflv_2116 from Anoxybacillus flavithermus (strain DSM 21510 / WK1).